The following is an 897-amino-acid chain: Major intrinsically disordered Notch2-binding receptor 1 (897 aa).

Residues 1–872 lie on the Cytoplasmic side of the membrane; it reads MDAMPEYSLF…AEFRRAKACK (872 aa). 3 disordered regions span residues 405–433, 450–502, and 688–766; these read AKDKPTASPSGFSKKSNGSKTKDMSSVAC, SINC…EDSE, and TRRS…PPKD. Polar residues-rich tracts occupy residues 411-423 and 452-471; these read ASPSGFSKKSNGS and NCPSFQSSNVDNGMSVGTQT. The segment covering 472–498 has biased composition (basic and acidic residues); it reads EQHESRKVKDYPSQNKFKERPPFKHSE. Residues 697–724 show a composition bias toward polar residues; that stretch reads EENSATESKVASITNSPRDWRTVSYSSH. Over residues 725–756 the composition is skewed to basic and acidic residues; sequence NGEEGKERDRHSEGKERHRKSREAERQYEAHQ. A helical membrane pass occupies residues 873 to 893; sequence IGALIFAAACTVILVIVVPIC. The Extracellular segment spans residues 894–897; sequence TMKS.

Belongs to the MINAR family.

The protein localises to the cell membrane. Functionally, intrinsically disordered protein which may negatively regulate mTOR signaling pathway by stabilizing the mTOR complex component DEPTOR. Negatively regulates angiogenesis. Negatively regulates cell growth. May play a role in neuronal development. In Danio rerio (Zebrafish), this protein is Major intrinsically disordered Notch2-binding receptor 1 (minar1).